The following is a 307-amino-acid chain: Ubiquitin recognition factor in ER-associated degradation protein 1 (307 aa).

N-acetylmethionine is present on Met-1. Residues Ser-129, Ser-231, Ser-245, Ser-247, and Ser-299 each carry the phosphoserine modification. 2 disordered regions span residues 230-255 and 282-307; these read GSGNRLDGKKKGVEPSPSPIKPGDIK and EEDEAGGRFVAFSGEGQSLRKKGRKP.

Belongs to the UFD1 family. In terms of assembly, interacts with USP13. Heterodimer with NPLOC4, this heterodimer binds VCP and inhibits Golgi membrane fusion. Interacts with ZFAND2B; probably through VCP.

It localises to the nucleus. It is found in the cytoplasm. The protein resides in the cytosol. The protein operates within protein degradation; proteasomal ubiquitin-dependent pathway. Its function is as follows. Essential component of the ubiquitin-dependent proteolytic pathway which degrades ubiquitin fusion proteins. The ternary complex containing UFD1, VCP and NPLOC4 binds ubiquitinated proteins and is necessary for the export of misfolded proteins from the ER to the cytoplasm, where they are degraded by the proteasome. The NPLOC4-UFD1-VCP complex regulates spindle disassembly at the end of mitosis and is necessary for the formation of a closed nuclear envelope. It may be involved in the development of some ectoderm-derived structures. Acts as a negative regulator of type I interferon production via the complex formed with VCP and NPLOC4, which binds to RIGI and recruits RNF125 to promote ubiquitination and degradation of RIGI. The protein is Ubiquitin recognition factor in ER-associated degradation protein 1 of Rattus norvegicus (Rat).